The primary structure comprises 593 residues: NADH-quinone oxidoreductase subunit C/D (593 aa).

The tract at residues 1–184 (MTADNALYIP…DPYSLTLAKQ (184 aa)) is NADH dehydrogenase I subunit C. The tract at residues 208-593 (DYMFLNLGPN…IDFVMADVDR (386 aa)) is NADH dehydrogenase I subunit D.

In the N-terminal section; belongs to the complex I 30 kDa subunit family. It in the C-terminal section; belongs to the complex I 49 kDa subunit family. In terms of assembly, NDH-1 is composed of 13 different subunits. Subunits NuoB, CD, E, F, and G constitute the peripheral sector of the complex.

Its subcellular location is the cell inner membrane. It carries out the reaction a quinone + NADH + 5 H(+)(in) = a quinol + NAD(+) + 4 H(+)(out). NDH-1 shuttles electrons from NADH, via FMN and iron-sulfur (Fe-S) centers, to quinones in the respiratory chain. The immediate electron acceptor for the enzyme in this species is believed to be ubiquinone. Couples the redox reaction to proton translocation (for every two electrons transferred, four hydrogen ions are translocated across the cytoplasmic membrane), and thus conserves the redox energy in a proton gradient. This Pseudomonas savastanoi pv. phaseolicola (strain 1448A / Race 6) (Pseudomonas syringae pv. phaseolicola (strain 1448A / Race 6)) protein is NADH-quinone oxidoreductase subunit C/D.